The chain runs to 284 residues: 3-methyl-2-oxobutanoate hydroxymethyltransferase 2 (284 aa).

2 residues coordinate Mg(2+): Asp49 and Asp88. 3-methyl-2-oxobutanoate-binding positions include Asp49–Ser50, Asp88, and Lys118. Residue Glu120 participates in Mg(2+) binding. Catalysis depends on Glu187, which acts as the Proton acceptor.

This sequence belongs to the PanB family. In terms of assembly, homodecamer; pentamer of dimers. The cofactor is Mg(2+).

It localises to the cytoplasm. The enzyme catalyses 3-methyl-2-oxobutanoate + (6R)-5,10-methylene-5,6,7,8-tetrahydrofolate + H2O = 2-dehydropantoate + (6S)-5,6,7,8-tetrahydrofolate. It functions in the pathway cofactor biosynthesis; (R)-pantothenate biosynthesis; (R)-pantoate from 3-methyl-2-oxobutanoate: step 1/2. Its function is as follows. Catalyzes the reversible reaction in which hydroxymethyl group from 5,10-methylenetetrahydrofolate is transferred onto alpha-ketoisovalerate to form ketopantoate. This is 3-methyl-2-oxobutanoate hydroxymethyltransferase 2 from Burkholderia ambifaria (strain ATCC BAA-244 / DSM 16087 / CCUG 44356 / LMG 19182 / AMMD) (Burkholderia cepacia (strain AMMD)).